We begin with the raw amino-acid sequence, 264 residues long: Phosphonoacetaldehyde hydrolase (264 aa).

D9 (nucleophile) is an active-site residue. D9 and A11 together coordinate Mg(2+). Catalysis depends on K50, which acts as the Schiff-base intermediate with substrate. D183 is a Mg(2+) binding site.

Belongs to the HAD-like hydrolase superfamily. PhnX family. As to quaternary structure, homodimer. Requires Mg(2+) as cofactor.

It carries out the reaction phosphonoacetaldehyde + H2O = acetaldehyde + phosphate + H(+). In terms of biological role, involved in phosphonate degradation. This Bacillus cereus (strain ATCC 10987 / NRS 248) protein is Phosphonoacetaldehyde hydrolase.